Reading from the N-terminus, the 224-residue chain is Extracellular protease inhibitor 10 (224 aa).

An N-terminal signal peptide occupies residues 1 to 22 (MKSAFTLSLALVAVTATISAAA). Kazal-like domains lie at 23 to 72 (DDNC…ECAS), 90 to 127 (TSGT…AKCK), and 156 to 210 (GYQG…PCPS). Residue asparagine 25 is glycosylated (N-linked (GlcNAc...) asparagine). Intrachain disulfides connect cysteine 26–cysteine 56, cysteine 30–cysteine 49, and cysteine 38–cysteine 70. Positions 69–92 (ECASTPASSATPSPVTSSTGSTSG) are disordered. Residues 71-92 (ASTPASSATPSPVTSSTGSTSG) are compositionally biased toward low complexity. Disulfide bonds link cysteine 96-cysteine 126, cysteine 100-cysteine 119, cysteine 162-cysteine 193, cysteine 167-cysteine 186, and cysteine 175-cysteine 208. N-linked (GlcNAc...) asparagine glycosylation occurs at asparagine 199. A disordered region spans residues 202-224 (MVGEGPCPSQEQQQQQQQQQQKL). The span at 211–224 (QEQQQQQQQQQQKL) shows a compositional bias: low complexity.

As to quaternary structure, interacts with host subtilisin-like protease P69B.

The protein localises to the secreted. In terms of biological role, secreted effector that interacts with and inhibits the pathogenesis-related P69B subtilisin-like serine protease of host tomato. Inhibition of host proteases by a pathogen extracellular protease inhibitor forms a specific type of defense-counterdefense mechanism between plants and microbial pathogens. This is Extracellular protease inhibitor 10 from Phytophthora infestans (Potato late blight agent).